We begin with the raw amino-acid sequence, 223 residues long: Pyridoxine/pyridoxamine 5'-phosphate oxidase (223 aa).

Substrate is bound by residues 13-16 and Lys-73; that span reads RKNY. FMN is bound by residues 68 to 73, 83 to 84, Lys-90, and Gln-112; these read RIVLLK and YT. Positions 130, 134, and 138 each coordinate substrate. Residues 147 to 148 and Trp-193 contribute to the FMN site; that span reads QS. Residue 199-201 coordinates substrate; the sequence is RLH. Arg-203 contributes to the FMN binding site.

Belongs to the pyridoxamine 5'-phosphate oxidase family. As to quaternary structure, homodimer. The cofactor is FMN.

The enzyme catalyses pyridoxamine 5'-phosphate + O2 + H2O = pyridoxal 5'-phosphate + H2O2 + NH4(+). It catalyses the reaction pyridoxine 5'-phosphate + O2 = pyridoxal 5'-phosphate + H2O2. It functions in the pathway cofactor metabolism; pyridoxal 5'-phosphate salvage; pyridoxal 5'-phosphate from pyridoxamine 5'-phosphate: step 1/1. Its pathway is cofactor metabolism; pyridoxal 5'-phosphate salvage; pyridoxal 5'-phosphate from pyridoxine 5'-phosphate: step 1/1. In terms of biological role, catalyzes the oxidation of either pyridoxine 5'-phosphate (PNP) or pyridoxamine 5'-phosphate (PMP) into pyridoxal 5'-phosphate (PLP). The sequence is that of Pyridoxine/pyridoxamine 5'-phosphate oxidase from Rhodopirellula baltica (strain DSM 10527 / NCIMB 13988 / SH1).